Reading from the N-terminus, the 642-residue chain is 1-deoxy-D-xylulose-5-phosphate synthase 2 (642 aa).

Residues histidine 73 and 113-115 contribute to the thiamine diphosphate site; that span reads SHA. Aspartate 144 contributes to the Mg(2+) binding site. Thiamine diphosphate-binding positions include 145-146, asparagine 174, tyrosine 285, and glutamate 366; that span reads GA. A Mg(2+)-binding site is contributed by asparagine 174.

It belongs to the transketolase family. DXPS subfamily. In terms of assembly, homodimer. It depends on Mg(2+) as a cofactor. Requires thiamine diphosphate as cofactor.

It carries out the reaction D-glyceraldehyde 3-phosphate + pyruvate + H(+) = 1-deoxy-D-xylulose 5-phosphate + CO2. It participates in metabolic intermediate biosynthesis; 1-deoxy-D-xylulose 5-phosphate biosynthesis; 1-deoxy-D-xylulose 5-phosphate from D-glyceraldehyde 3-phosphate and pyruvate: step 1/1. Catalyzes the acyloin condensation reaction between C atoms 2 and 3 of pyruvate and glyceraldehyde 3-phosphate to yield 1-deoxy-D-xylulose-5-phosphate (DXP). This is 1-deoxy-D-xylulose-5-phosphate synthase 2 from Streptomyces coelicolor (strain ATCC BAA-471 / A3(2) / M145).